The chain runs to 319 residues: tRNA dimethylallyltransferase (319 aa).

ATP is bound at residue 26 to 33; sequence GPTAAGKS. 28–33 provides a ligand contact to substrate; that stretch reads TAAGKS. Positions 51–54 are interaction with substrate tRNA; it reads DSMQ.

The protein belongs to the IPP transferase family. Monomer. Mg(2+) is required as a cofactor.

The catalysed reaction is adenosine(37) in tRNA + dimethylallyl diphosphate = N(6)-dimethylallyladenosine(37) in tRNA + diphosphate. Catalyzes the transfer of a dimethylallyl group onto the adenine at position 37 in tRNAs that read codons beginning with uridine, leading to the formation of N6-(dimethylallyl)adenosine (i(6)A). This chain is tRNA dimethylallyltransferase, found in Salinispora tropica (strain ATCC BAA-916 / DSM 44818 / JCM 13857 / NBRC 105044 / CNB-440).